The chain runs to 563 residues: BOS complex subunit NCLN (563 aa).

Positions 1–42 are cleaved as a signal peptide; sequence MLEEAGEVLENMLKASCLPLGFIVFLPAVLLLVAPPLPAADA. Topologically, residues 43–522 are lumenal; the sequence is AHEFTVYRMQ…VMNAYRVKPA (480 aa). Residues Asn-241 and Asn-428 are each glycosylated (N-linked (GlcNAc...) asparagine). Residues 523-543 traverse the membrane as a helical segment; that stretch reads IFDLLLAVCIGAYLGMAYTAV. Topologically, residues 544–563 are cytoplasmic; that stretch reads QHFDLLYKTVQRLLVKAKTQ.

The protein belongs to the nicastrin family. Component of the back of Sec61 (BOS) complex, composed of NCLN/Nicalin, NOMO1 and TMEM147. The BOS complex is part of the multi-pass translocon (MPT) complex, composed of three subcomplexes, the GEL complex (composed of RAB5IF/OPTI and TMCO1), the BOS complex (composed of NCLN/Nicalin, NOMO1 and TMEM147) and the PAT complex (composed of WDR83OS/Asterix and CCDC47). The MPT complex associates with the SEC61 complex.

It is found in the endoplasmic reticulum membrane. Functionally, component of the multi-pass translocon (MPT) complex that mediates insertion of multi-pass membrane proteins into the lipid bilayer of membranes. The MPT complex takes over after the SEC61 complex: following membrane insertion of the first few transmembrane segments of proteins by the SEC61 complex, the MPT complex occludes the lateral gate of the SEC61 complex to promote insertion of subsequent transmembrane regions. May antagonize Nodal signaling and subsequent organization of axial structures during mesodermal patterning, via its interaction with NOMO. The sequence is that of BOS complex subunit NCLN from Canis lupus familiaris (Dog).